The sequence spans 314 residues: MDFKDYYKILDVEPAADDKAIKTAYRKLARKYHPDVSKEAGAEDKFKEASEAYEVLSSPEKRAEYDELRKYGRQGRPFQTPPGWQSRAGAGAGGFEETADFSEFFSSIFGGRPQQGGRTRNPGRKGQDVEMELAVFLEETLSGESKQVSFKVPQHSPNGQRMGDITKTLNVKIPAGVVDGERIRLKGQGAPGIGGGANGDLYLIIRLAPHPMFEVEGHDLVITVPLAPWEAALGTKVAVPTLTSRLNLTIRPDSQNGQRLRIKGNGLMNKSGERGDLYAQLKIVMPKQTDEAARALWQKLADSAAFDPRAQWKG.

Residues 5–69 form the J domain; that stretch reads DYYKILDVEP…EKRAEYDELR (65 aa). A disordered region spans residues 73-92; that stretch reads RQGRPFQTPPGWQSRAGAGA.

Its subcellular location is the cytoplasm. The protein localises to the nucleoid. Functionally, DNA-binding protein that preferentially recognizes a curved DNA sequence. It is probably a functional analog of DnaJ; displays overlapping activities with DnaJ, but functions under different conditions, probably acting as a molecular chaperone in an adaptive response to environmental stresses other than heat shock. Lacks autonomous chaperone activity; binds native substrates and targets them for recognition by DnaK. Its activity is inhibited by the binding of CbpM. The polypeptide is Curved DNA-binding protein (Pseudomonas syringae pv. tomato (strain ATCC BAA-871 / DC3000)).